The following is a 380-amino-acid chain: Cytochrome b (380 aa).

4 helical membrane-spanning segments follow: residues 34 to 54 (FGSLLGLCLIIQILTGLFLAM), 78 to 99 (WLIRNTHANGASMFFICVYLHI), 114 to 134 (WNIGVIILLLLMATAFVGYVL), and 179 to 199 (FFTFHFLLPFVIVALTMVHLL). Heme b-binding residues include His84 and His98. Heme b is bound by residues His183 and His197. His202 serves as a coordination point for a ubiquinone. 4 helical membrane-spanning segments follow: residues 227 to 247 (YKDLLGFFILLFFLTFLALFT), 289 to 309 (LGGVLALAFSILILLLVPILH), 321 to 341 (ISQLLFWLLVANTIILTWIGG), and 348 to 368 (FITIGQIASITYFSFFLILFP).

The protein belongs to the cytochrome b family. In terms of assembly, the cytochrome bc1 complex contains 3 respiratory subunits (MT-CYB, CYC1 and UQCRFS1), 2 core proteins (UQCRC1 and UQCRC2) and probably 6 low-molecular weight proteins. Heme b serves as cofactor.

The protein localises to the mitochondrion inner membrane. In terms of biological role, component of the ubiquinol-cytochrome c reductase complex (complex III or cytochrome b-c1 complex) that is part of the mitochondrial respiratory chain. The b-c1 complex mediates electron transfer from ubiquinol to cytochrome c. Contributes to the generation of a proton gradient across the mitochondrial membrane that is then used for ATP synthesis. The sequence is that of Cytochrome b (mt-cyb) from Pastinachus sephen (Cowtail stingray).